The chain runs to 390 residues: 5-hydroxytryptamine receptor 1B (390 aa).

Residues 1 to 46 are Extracellular-facing; that stretch reads MEEPGAQCAPPPPAGSETWVPQANLSSAPSQNCSAKDYIYQDSISL. N-linked (GlcNAc...) asparagine glycans are attached at residues N24 and N32. The helical transmembrane segment at 47–72 threads the bilayer; that stretch reads PWKVLLVMLLALITLATTLSNAFVIA. At 73–86 the chain is on the cytoplasmic side; sequence TVYRTRKLHTPANY. A helical transmembrane segment spans residues 87-111; that stretch reads LIASLAVTDLLVSILVMPISTMYTV. Residues 112–119 are Extracellular-facing; the sequence is TGRWTLGQ. Residues 120-145 form a helical membrane-spanning segment; that stretch reads VVCDFWLSSDITCCTASILHLCVIAL. A disulfide bridge connects residues C122 and C199. Ergotamine-binding residues include D129 and T134. The DRY motif; important for ligand-induced conformation changes and signaling motif lies at 146 to 148; the sequence is DRY. Topologically, residues 146 to 165 are cytoplasmic; sequence DRYWAITDAVEYSAKRTPKR. Residues 166–184 traverse the membrane as a helical segment; that stretch reads AAVMIALVWVFSISISLPP. Residues 185–205 are Extracellular-facing; sequence FFWRQAKAEEEVSECVVNTDH. An ergotamine-binding site is contributed by V201. Residues 206–229 form a helical membrane-spanning segment; the sequence is ILYTVYSTVGAFYFPTLLLIALYG. At 230-315 the chain is on the cytoplasmic side; the sequence is RIYVEARSRI…AARERKATKT (86 aa). Positions 259–272 are enriched in polar residues; sequence DSPGSTSSVTSINS. The interval 259 to 281 is disordered; it reads DSPGSTSSVTSINSRVPDVPSES. The helical transmembrane segment at 316-337 threads the bilayer; it reads LGIILGAFIVCWLPFFIISLVM. Over 338-347 the chain is Extracellular; sequence PICKDACWFH. A helical transmembrane segment spans residues 348-370; sequence LAIFDFFTWLGYLNSLINPIIYT. The NPxxY motif; important for ligand-induced conformation changes and signaling motif lies at 365 to 369; sequence NPIIY. Topologically, residues 371-390 are cytoplasmic; it reads MSNEDFKQAFHKLIRFKCTS. A lipid anchor (S-palmitoyl cysteine) is attached at C388.

It belongs to the G-protein coupled receptor 1 family. As to quaternary structure, homodimer. Heterodimer with HTR1D. In terms of processing, phosphorylated. Desensitization of the receptor may be mediated by its phosphorylation. Palmitoylated. Detected in cerebral artery smooth muscle cells (at protein level). Detected in brain cortex, striatum, amygdala, medulla, hippocampus, caudate nucleus and putamen.

It localises to the cell membrane. In terms of biological role, G-protein coupled receptor for 5-hydroxytryptamine (serotonin). Also functions as a receptor for ergot alkaloid derivatives, various anxiolytic and antidepressant drugs and other psychoactive substances, such as lysergic acid diethylamide (LSD). Ligand binding causes a conformation change that triggers signaling via guanine nucleotide-binding proteins (G proteins) and modulates the activity of downstream effectors, such as adenylate cyclase. HTR1B is coupled to G(i)/G(o) G alpha proteins and mediates inhibitory neurotransmission by inhibiting adenylate cyclase activity. Arrestin family members inhibit signaling via G proteins and mediate activation of alternative signaling pathways. Regulates the release of 5-hydroxytryptamine, dopamine and acetylcholine in the brain, and thereby affects neural activity, nociceptive processing, pain perception, mood and behavior. Besides, plays a role in vasoconstriction of cerebral arteries. This Homo sapiens (Human) protein is 5-hydroxytryptamine receptor 1B.